Consider the following 156-residue polypeptide: Male-specific protein scotti (156 aa).

Residues Thr26–Gln48 form a disordered region. N-linked (GlcNAc...) asparagine glycosylation is present at Asn137.

The protein belongs to the male-specific scotti family.

Its function is as follows. Post-meiotically transcribed gene that has a role in late spermiogenesis; required for actin cone progression during spermatid individualization. In Drosophila erecta (Fruit fly), this protein is Male-specific protein scotti.